Here is a 200-residue protein sequence, read N- to C-terminus: METVLRVGVAGPVGSGKTALVDALCKALRDRYRLAVVTNDIYTQEDAQFLVRSQALPPERILGVETGGCPHTAIREDASLNLAAIQQLETAFRPLDLIFVESGGDNLAATFSPELVDLTIYVIDVAAGDKIPRKGGPGITKSDLLVINKIDLAPYVGADLEVMKRDTLKMRGDRPYVMTNLKTGLGLDQVIAFLTVHLAA.

A GTP-binding site is contributed by 11-18 (GPVGSGKT).

The protein belongs to the SIMIBI class G3E GTPase family. UreG subfamily. In terms of assembly, homodimer. UreD, UreF and UreG form a complex that acts as a GTP-hydrolysis-dependent molecular chaperone, activating the urease apoprotein by helping to assemble the nickel containing metallocenter of UreC. The UreE protein probably delivers the nickel.

It is found in the cytoplasm. In terms of biological role, facilitates the functional incorporation of the urease nickel metallocenter. This process requires GTP hydrolysis, probably effectuated by UreG. In Thermosynechococcus vestitus (strain NIES-2133 / IAM M-273 / BP-1), this protein is Urease accessory protein UreG.